A 695-amino-acid chain; its full sequence is Electrogenic aspartate/glutamate antiporter Aralar, mitochondrial (695 aa).

An N-terminal domain region spans residues 1-310; the sequence is MPMHIPFPFN…DYSDLSNIAP (310 aa). The Mitochondrial intermembrane segment spans residues 2-345; it reads PMHIPFPFNW…FIQVLESSYR (344 aa). EF-hand domains are found at residues 71-104, 105-140, 142-175, and 176-211; these read FNDE…GLLC, TPDA…TELH, KIPF…LLHD, and FHEE…VKRH. Residues Asp84, Ser86, Asp88, Leu90, Glu95, Asp118, Asn122, Thr124, and Asp129 each coordinate Ca(2+). Residues Asp189, Thr193, and Asp200 each coordinate Ca(2+). The segment at 311–327 is linker loop domain; that stretch reads EHYTKHMTHRLAEIKAV. A carrier domain region spans residues 336–627; it reads FIQVLESSYR…RLFYVDFGGT (292 aa). 3 Solcar repeats span residues 340–431, 439–523, and 531–619; these read LESS…VRDK, IPTW…TKAM, and NHPL…LQRL. The chain crosses the membrane as a helical span at residues 346-363; it reads FTLGSFAGAVGATVVYPI. Residues 364–405 lie on the Mitochondrial matrix side of the membrane; it reads DLVKTRMQNQRAGSYIGEVAYRNSWDCFKKVVRHEGFMGLYR. Residues 406 to 425 form a helical membrane-spanning segment; sequence GLLPQLMGVAPEKAIKLTVN. Residues 426–448 lie on the Mitochondrial intermembrane side of the membrane; the sequence is DLVRDKLTDKKGNIPTWAEVLAG. A helical membrane pass occupies residues 449–462; the sequence is GCAGASQVVFTNPL. Topologically, residues 463-497 are mitochondrial matrix; it reads EIVKIRLQVAGEIASGSKIRAWSVVRELGLFGLYK. Residues 498–517 form a helical membrane-spanning segment; that stretch reads GARACLLRDVPFSAIYFPTY. The Mitochondrial intermembrane portion of the chain corresponds to 518-536; it reads AHTKAMMADKDGYNHPLTL. A helical membrane pass occupies residues 537–554; sequence LAAGAIAGVPAASLVTPA. At 555–593 the chain is on the mitochondrial matrix side; sequence DVIKTRLQVVARSGQTTYTGVWDATKKIMAEEGPRAFWK. A helical membrane pass occupies residues 594–613; it reads GTAARVFRSSPQFGVTLVTY. The Mitochondrial intermembrane portion of the chain corresponds to 614–695; sequence ELLQRLFYVD…AASPSTATGS (82 aa). The C-terminal domain stretch occupies residues 628-695; the sequence is QPKGSEAHKI…AASPSTATGS (68 aa).

It belongs to the mitochondrial carrier (TC 2.A.29) family. In terms of assembly, homodimer (via N-terminus). The cofactor is Ca(2+). In terms of tissue distribution, expressed throughout the body in both males and females, including in ovaries and testes. Specifically expressed in female ovaries. As to expression, expressed throughout the body in both males and females but absent from ovaries and testes.

It is found in the mitochondrion inner membrane. It catalyses the reaction L-aspartate(in) + L-glutamate(out) + H(+)(out) = L-aspartate(out) + L-glutamate(in) + H(+)(in). The catalysed reaction is 3-sulfino-L-alanine(out) + L-glutamate(in) + H(+)(in) = 3-sulfino-L-alanine(in) + L-glutamate(out) + H(+)(out). It carries out the reaction L-2-aminoadipate(in) + L-glutamate(out) + H(+)(out) = L-2-aminoadipate(out) + L-glutamate(in) + H(+)(in). The enzyme catalyses L-glutamine(in) + L-glutamate(out) + Na(+)(out) + H(+)(out) = L-glutamine(out) + L-glutamate(in) + Na(+)(in) + H(+)(in). Its activity is regulated as follows. Activated by Ca(2+). Inhibited by p-chloromercuribenzoate, pyrocarbonate, mersalyl, tannic acid and N-ethylmaleimide. Mitochondrial electrogenic aspartate/glutamate antiporter that favors efflux of aspartate and entry of glutamate and proton within the mitochondria as part of the malate-aspartate shuttle. Also mediates the exchange of L-cysteinesulfinate (3-sulfino-L-alanine) for L-glutamate. Necessary for gamma-aminobutyric acid (GABA) uptake in brain mitochondria in response to increased mitochondrial membrane polarization; does not possess detectable GABA transport activity but role may be indirect. Functionally, possesses transport activity towards L-aspartate, L-glutamate and L-cysteinesulfinate (3-sulfino-L-alanine). L-glutamine transport activity is undetectable. GABA transport activity is undetectable. In terms of biological role, possesses transport activity towards L-aspartate, L-glutamate and L-cysteinesulfinate (3-sulfino-L-alanine). Has a wider substrate specificity range that includes L-2-aminoadipate and L-glutamine. GABA transport activity is undetectable. The chain is Electrogenic aspartate/glutamate antiporter Aralar, mitochondrial from Drosophila melanogaster (Fruit fly).